Consider the following 87-residue polypeptide: Acyl-CoA-binding protein (87 aa).

At S2 the chain carries N-acetylserine. The region spanning 2–87 (SQAEFEKAAE…VEELKKKYGI (86 aa)) is the ACB domain. K8 is subject to N6-acetyllysine; alternate. The residue at position 8 (K8) is an N6-succinyllysine; alternate. K14 contacts an acyl-CoA. At K17 the chain carries N6-succinyllysine. N6-acetyllysine is present on K19. Y29 carries the post-translational modification Phosphotyrosine. An acyl-CoA is bound by residues 29–33 (YSHYK), K51, K55, and Y74. K51 carries the post-translational modification N6-acetyllysine. K55 carries the post-translational modification N6-acetyllysine; alternate. N6-succinyllysine; alternate is present on K55. N6-(2-hydroxyisobutyryl)lysine; alternate is present on K55. An N6-malonyllysine; alternate modification is found at K55. N6-acetyllysine; alternate is present on K77. K77 carries the post-translational modification N6-succinyllysine; alternate.

The protein belongs to the ACBP family. Monomer.

The protein localises to the endoplasmic reticulum. The protein resides in the golgi apparatus. Functionally, binds medium- and long-chain acyl-CoA esters with very high affinity and may function as an intracellular carrier of acyl-CoA esters. It is also able to displace diazepam from the benzodiazepine (BZD) recognition site located on the GABA type A receptor. It is therefore possible that this protein also acts as a neuropeptide to modulate the action of the GABA receptor. In terms of biological role, DBI(32-86) has antibacterial properties. The protein is Acyl-CoA-binding protein (DBI) of Sus scrofa (Pig).